The following is a 375-amino-acid chain: Alcohol dehydrogenase 1 (375 aa).

Ser2 bears the N-acetylserine mark. Zn(2+) contacts are provided by Cys47, His68, Cys98, Cys101, Cys104, Cys112, and Cys175. NAD(+) contacts are provided by residues 200–205 (GLGGVG), Asp224, and Lys229. Lys234 carries the N6-succinyllysine modification. 293-295 (VGV) is a binding site for NAD(+). Lys340 carries the N6-succinyllysine modification. An NAD(+)-binding site is contributed by Arg370.

This sequence belongs to the zinc-containing alcohol dehydrogenase family. Class-I subfamily. Dimer of identical or non-identical chains of three types (A, B, C), which are coded by 3 separate genes at different loci. Zn(2+) is required as a cofactor. As to expression, expressed at high levels in the liver, small intestine and eye, at moderate levels in kidney, ovary and uterus, and at low levels in the spinal cord, thymus, heart, stomach mucosa, skin and testis.

It localises to the cytoplasm. It catalyses the reaction a primary alcohol + NAD(+) = an aldehyde + NADH + H(+). It carries out the reaction a secondary alcohol + NAD(+) = a ketone + NADH + H(+). This Mus musculus (Mouse) protein is Alcohol dehydrogenase 1 (Adh1).